Here is a 264-residue protein sequence, read N- to C-terminus: Tryptophan synthase alpha chain (264 aa).

Active-site proton acceptor residues include Glu-49 and Asp-60.

It belongs to the TrpA family. As to quaternary structure, tetramer of two alpha and two beta chains.

It catalyses the reaction (1S,2R)-1-C-(indol-3-yl)glycerol 3-phosphate + L-serine = D-glyceraldehyde 3-phosphate + L-tryptophan + H2O. The protein operates within amino-acid biosynthesis; L-tryptophan biosynthesis; L-tryptophan from chorismate: step 5/5. The alpha subunit is responsible for the aldol cleavage of indoleglycerol phosphate to indole and glyceraldehyde 3-phosphate. This Picosynechococcus sp. (strain ATCC 27264 / PCC 7002 / PR-6) (Agmenellum quadruplicatum) protein is Tryptophan synthase alpha chain.